We begin with the raw amino-acid sequence, 92 residues long: Alpha-defensin 25 (92 aa).

An N-terminal signal peptide occupies residues 1–19 (MKTLVLLSALALLAFQVQA). A propeptide spanning residues 20-57 (DPIQNRDEESKIDEQPGKEDQAVSVSFGDPEGSSLQEE) is cleaved from the precursor. Over residues 24 to 40 (NRDEESKIDEQPGKEDQ) the composition is skewed to basic and acidic residues. The disordered stretch occupies residues 24 to 53 (NRDEESKIDEQPGKEDQAVSVSFGDPEGSS). 3 cysteine pairs are disulfide-bonded: cysteine 63/cysteine 92, cysteine 65/cysteine 80, and cysteine 70/cysteine 91.

This sequence belongs to the alpha-defensin family.

Its subcellular location is the secreted. In terms of biological role, may have microbicidal activities. The chain is Alpha-defensin 25 (Defa25) from Mus musculus (Mouse).